The primary structure comprises 392 residues: MANETLEDAVLASETLALAVELLKRRSVTPDDAGCHDLIAARLQALGFHIERHRHNDVDNLWARRGTASPVVCFAGHTDVVPPGPLEQWLSDPFEPTLRDGKLYARGAADMKTSDAAFVTATERFLARRPDHPGSIAFLLTSDEEGPATDGTVRVVEALKARGELLDYCIVGEPTSAAEFGDTIKNGRRGSLSGTLRVKGVQGHIAYPHLAKNPIHLAAPAIAELAETMWDEGNSYFPPTTWQISNIHAGTGVTNVIPGMVEIQFNFRFSTASTAEGLMDAVNEILDSHGLDYEIDWNLSGKPFLTPRGALCDRLSEAVHEVTGLTPELSTTGGTSDGRFIADICREVVEFGPLNMSIHKLNEHVALENVEQLAAVYEKALEKLLGESDERV.

Zn(2+) is bound at residue His-77. The active site involves Asp-79. Residue Asp-110 participates in Zn(2+) binding. The active-site Proton acceptor is Glu-144. Positions 145, 173, and 359 each coordinate Zn(2+).

Belongs to the peptidase M20A family. DapE subfamily. Homodimer. Requires Zn(2+) as cofactor. Co(2+) serves as cofactor.

The enzyme catalyses N-succinyl-(2S,6S)-2,6-diaminopimelate + H2O = (2S,6S)-2,6-diaminopimelate + succinate. The protein operates within amino-acid biosynthesis; L-lysine biosynthesis via DAP pathway; LL-2,6-diaminopimelate from (S)-tetrahydrodipicolinate (succinylase route): step 3/3. Its function is as follows. Catalyzes the hydrolysis of N-succinyl-L,L-diaminopimelic acid (SDAP), forming succinate and LL-2,6-diaminopimelate (DAP), an intermediate involved in the bacterial biosynthesis of lysine and meso-diaminopimelic acid, an essential component of bacterial cell walls. This chain is Succinyl-diaminopimelate desuccinylase, found in Thiobacillus denitrificans (strain ATCC 25259 / T1).